We begin with the raw amino-acid sequence, 285 residues long: Secreted alkaline triacylglycerol lipase (285 aa).

An N-terminal signal peptide occupies residues 1–20 (MLFNYQSLLVGVSLISQALS). The active-site Nucleophile is Ser159. Catalysis depends on charge relay system residues Asp215 and His268.

Belongs to the AB hydrolase superfamily. FaeA family.

It localises to the secreted. It catalyses the reaction a triacylglycerol + H2O = a diacylglycerol + a fatty acid + H(+). Functionally, secreted alkaline lipase that hydrolyzes acylglycerol lipids such as triacylglycerols and consequently releases free fatty acid. Is able to hydrolyze tributyrin (1,2,3-tributyryl-glycerin). In Penicillium cyclopium, this protein is Secreted alkaline triacylglycerol lipase.